We begin with the raw amino-acid sequence, 1569 residues long: Pentafunctional AROM polypeptide (1569 aa).

A 3-dehydroquinate synthase region spans residues 1–382 (MAEAKKPGPE…HEPRASVVDD (382 aa)). NAD(+) is bound by residues 49 to 51 (DTN), 84 to 87 (EASK), 115 to 117 (GGV), and aspartate 120. Arginine 131 is a binding site for 7-phospho-2-dehydro-3-deoxy-D-arabino-heptonate. An NAD(+)-binding site is contributed by 140–141 (TT). Aspartate 147 and lysine 153 together coordinate 7-phospho-2-dehydro-3-deoxy-D-arabino-heptonate. NAD(+) is bound at residue lysine 162. Asparagine 163 lines the 7-phospho-2-dehydro-3-deoxy-D-arabino-heptonate pocket. Residues 180–183 (FLET) and asparagine 191 each bind NAD(+). Glutamate 195 serves as a coordination point for Zn(2+). Residues 195 to 198 (EVVK) and lysine 248 each bind 7-phospho-2-dehydro-3-deoxy-D-arabino-heptonate. Residue glutamate 258 is the Proton acceptor; for 3-dehydroquinate synthase activity of the active site. 7-phospho-2-dehydro-3-deoxy-D-arabino-heptonate is bound by residues 262-266 (RNLLN) and histidine 269. Position 269 (histidine 269) interacts with Zn(2+). Catalysis depends on histidine 273, which acts as the Proton acceptor; for 3-dehydroquinate synthase activity. Residues histidine 285 and lysine 354 each contribute to the 7-phospho-2-dehydro-3-deoxy-D-arabino-heptonate site. Residue histidine 285 participates in Zn(2+) binding. Residues 395–837 (VTPGVPSNLD…WDILSQAFKV (443 aa)) are EPSP synthase. Cysteine 819 functions as the For EPSP synthase activity in the catalytic mechanism. The shikimate kinase stretch occupies residues 859-1053 (ERSVFIIGMR…MEKDHSFFVS (195 aa)). Residue 866-873 (GMRGAGKT) participates in ATP binding. Positions 1054–1267 (LTVPDVSEAA…AAPGQMSAAE (214 aa)) are 3-dehydroquinase. Histidine 1170 acts as the Proton acceptor; for 3-dehydroquinate dehydratase activity in catalysis. The active-site Schiff-base intermediate with substrate; for 3-dehydroquinate dehydratase activity is the lysine 1198. The shikimate dehydrogenase stretch occupies residues 1280-1569 (PCNFYLFGKP…RDARSAVLGL (290 aa)).

It in the N-terminal section; belongs to the sugar phosphate cyclases superfamily. Dehydroquinate synthase family. In the 2nd section; belongs to the EPSP synthase family. This sequence in the 3rd section; belongs to the shikimate kinase family. The protein in the 4th section; belongs to the type-I 3-dehydroquinase family. It in the C-terminal section; belongs to the shikimate dehydrogenase family. Homodimer. Zn(2+) serves as cofactor.

The protein localises to the cytoplasm. The enzyme catalyses 7-phospho-2-dehydro-3-deoxy-D-arabino-heptonate = 3-dehydroquinate + phosphate. It carries out the reaction 3-dehydroquinate = 3-dehydroshikimate + H2O. It catalyses the reaction shikimate + NADP(+) = 3-dehydroshikimate + NADPH + H(+). The catalysed reaction is shikimate + ATP = 3-phosphoshikimate + ADP + H(+). The enzyme catalyses 3-phosphoshikimate + phosphoenolpyruvate = 5-O-(1-carboxyvinyl)-3-phosphoshikimate + phosphate. It functions in the pathway metabolic intermediate biosynthesis; chorismate biosynthesis; chorismate from D-erythrose 4-phosphate and phosphoenolpyruvate: step 2/7. Its pathway is metabolic intermediate biosynthesis; chorismate biosynthesis; chorismate from D-erythrose 4-phosphate and phosphoenolpyruvate: step 3/7. It participates in metabolic intermediate biosynthesis; chorismate biosynthesis; chorismate from D-erythrose 4-phosphate and phosphoenolpyruvate: step 4/7. The protein operates within metabolic intermediate biosynthesis; chorismate biosynthesis; chorismate from D-erythrose 4-phosphate and phosphoenolpyruvate: step 5/7. It functions in the pathway metabolic intermediate biosynthesis; chorismate biosynthesis; chorismate from D-erythrose 4-phosphate and phosphoenolpyruvate: step 6/7. Functionally, the AROM polypeptide catalyzes 5 consecutive enzymatic reactions in prechorismate polyaromatic amino acid biosynthesis. This chain is Pentafunctional AROM polypeptide, found in Fusarium vanettenii (strain ATCC MYA-4622 / CBS 123669 / FGSC 9596 / NRRL 45880 / 77-13-4) (Fusarium solani subsp. pisi).